We begin with the raw amino-acid sequence, 267 residues long: Indole-3-glycerol phosphate synthase (267 aa).

This sequence belongs to the TrpC family.

It catalyses the reaction 1-(2-carboxyphenylamino)-1-deoxy-D-ribulose 5-phosphate + H(+) = (1S,2R)-1-C-(indol-3-yl)glycerol 3-phosphate + CO2 + H2O. The protein operates within amino-acid biosynthesis; L-tryptophan biosynthesis; L-tryptophan from chorismate: step 4/5. This chain is Indole-3-glycerol phosphate synthase, found in Cupriavidus necator (strain ATCC 17699 / DSM 428 / KCTC 22496 / NCIMB 10442 / H16 / Stanier 337) (Ralstonia eutropha).